The sequence spans 184 residues: dITP/XTP pyrophosphatase (184 aa).

8–13 (TGNKGK) contributes to the substrate binding site. Glutamate 37 and aspartate 66 together coordinate Mg(2+). Aspartate 66 serves as the catalytic Proton acceptor. Residues serine 67, 142 to 145 (FGYD), lysine 163, and 168 to 169 (HR) contribute to the substrate site.

The protein belongs to the HAM1 NTPase family. As to quaternary structure, homodimer. Requires Mg(2+) as cofactor.

It catalyses the reaction XTP + H2O = XMP + diphosphate + H(+). It carries out the reaction dITP + H2O = dIMP + diphosphate + H(+). The enzyme catalyses ITP + H2O = IMP + diphosphate + H(+). In terms of biological role, pyrophosphatase that catalyzes the hydrolysis of nucleoside triphosphates to their monophosphate derivatives, with a high preference for the non-canonical purine nucleotides XTP (xanthosine triphosphate), dITP (deoxyinosine triphosphate) and ITP. Seems to function as a house-cleaning enzyme that removes non-canonical purine nucleotides from the nucleotide pool, thus preventing their incorporation into DNA/RNA and avoiding chromosomal lesions. The polypeptide is dITP/XTP pyrophosphatase (Methanosarcina mazei (strain ATCC BAA-159 / DSM 3647 / Goe1 / Go1 / JCM 11833 / OCM 88) (Methanosarcina frisia)).